Reading from the N-terminus, the 271-residue chain is MVRPRRVFAQHWLKSEKALDAIVKAAECSTNDRILEIGPGTGILTRRLLPLVEALLAVEIDRDLCKLLVKQLGQKENFLLLQGDFLTLDLVANLLTFPKFQKPNKVVANIPYNITGPIIEKLLGTIANPNPEPFDSIVLLIQKEVAERLYAKAGSRTFGALSVRVQYLADCEFICDVPAGAFHPPPKVDSAVVRLRPRQIQIPARDPKRLENLVKLGFGAKRKMLRNNLQSVVDRDRLSQLLEQLNINPQARAEDISTQQWVELANLLGVE.

Residues His11, Leu13, Gly38, Glu59, Asp84, and Asn109 each contribute to the S-adenosyl-L-methionine site.

It belongs to the class I-like SAM-binding methyltransferase superfamily. rRNA adenine N(6)-methyltransferase family. RsmA subfamily.

It localises to the cytoplasm. It catalyses the reaction adenosine(1518)/adenosine(1519) in 16S rRNA + 4 S-adenosyl-L-methionine = N(6)-dimethyladenosine(1518)/N(6)-dimethyladenosine(1519) in 16S rRNA + 4 S-adenosyl-L-homocysteine + 4 H(+). Functionally, specifically dimethylates two adjacent adenosines (A1518 and A1519) in the loop of a conserved hairpin near the 3'-end of 16S rRNA in the 30S particle. May play a critical role in biogenesis of 30S subunits. This is Ribosomal RNA small subunit methyltransferase A from Trichormus variabilis (strain ATCC 29413 / PCC 7937) (Anabaena variabilis).